The chain runs to 73 residues: UPF0057 membrane protein At4g30650 (73 aa).

The next 2 membrane-spanning stretches (helical) occupy residues 4–24 (NMEVFCEILIAILLPPLGVCL) and 37–57 (LVLTILGYIPGIIYALYVIVF).

The protein belongs to the UPF0057 (PMP3) family.

The protein localises to the membrane. The protein is UPF0057 membrane protein At4g30650 of Arabidopsis thaliana (Mouse-ear cress).